Consider the following 319-residue polypeptide: uncharacterized protein (319 aa).

Low complexity predominate over residues 268-312; that stretch reads SSVVAVTHPPSTTSTTTSVSETLSSFIAPSDLSSQPSPSSHPSSP. A disordered region spans residues 268 to 319; the sequence is SSVVAVTHPPSTTSTTTSVSETLSSFIAPSDLSSQPSPSSHPSSPFGNHNEF.

This is an uncharacterized protein from Lepidoptera (butterflies and moths).